Consider the following 216-residue polypeptide: Octanoyltransferase (216 aa).

The BPL/LPL catalytic domain maps to 31-205 (STTRDEVWLV…ELVTLLDYEQ (175 aa)). Substrate-binding positions include 70-77 (RGGQVTYH), 137-139 (SLG), and 150-152 (GLA). Cys168 acts as the Acyl-thioester intermediate in catalysis.

This sequence belongs to the LipB family.

It is found in the cytoplasm. It carries out the reaction octanoyl-[ACP] + L-lysyl-[protein] = N(6)-octanoyl-L-lysyl-[protein] + holo-[ACP] + H(+). It functions in the pathway protein modification; protein lipoylation via endogenous pathway; protein N(6)-(lipoyl)lysine from octanoyl-[acyl-carrier-protein]: step 1/2. Functionally, catalyzes the transfer of endogenously produced octanoic acid from octanoyl-acyl-carrier-protein onto the lipoyl domains of lipoate-dependent enzymes. Lipoyl-ACP can also act as a substrate although octanoyl-ACP is likely to be the physiological substrate. This chain is Octanoyltransferase, found in Vibrio cholerae serotype O1 (strain ATCC 39541 / Classical Ogawa 395 / O395).